The primary structure comprises 65 residues: Large ribosomal subunit protein bL35 (65 aa).

Belongs to the bacterial ribosomal protein bL35 family.

The polypeptide is Large ribosomal subunit protein bL35 (Edwardsiella ictaluri (strain 93-146)).